A 381-amino-acid polypeptide reads, in one-letter code: Queuine tRNA-ribosyltransferase (381 aa).

Asp96 acts as the Proton acceptor in catalysis. Residues 96-100 (DSGGF), Asp150, Gln193, and Gly220 contribute to the substrate site. An RNA binding region spans residues 251-257 (GVGSPDS). Asp270 serves as the catalytic Nucleophile. The RNA binding; important for wobble base 34 recognition stretch occupies residues 275–279 (TRIAR). Zn(2+) contacts are provided by Cys308, Cys310, Cys313, and His339.

It belongs to the queuine tRNA-ribosyltransferase family. Homodimer. Within each dimer, one monomer is responsible for RNA recognition and catalysis, while the other monomer binds to the replacement base PreQ1. Zn(2+) serves as cofactor.

It catalyses the reaction 7-aminomethyl-7-carbaguanine + guanosine(34) in tRNA = 7-aminomethyl-7-carbaguanosine(34) in tRNA + guanine. Its pathway is tRNA modification; tRNA-queuosine biosynthesis. In terms of biological role, catalyzes the base-exchange of a guanine (G) residue with the queuine precursor 7-aminomethyl-7-deazaguanine (PreQ1) at position 34 (anticodon wobble position) in tRNAs with GU(N) anticodons (tRNA-Asp, -Asn, -His and -Tyr). Catalysis occurs through a double-displacement mechanism. The nucleophile active site attacks the C1' of nucleotide 34 to detach the guanine base from the RNA, forming a covalent enzyme-RNA intermediate. The proton acceptor active site deprotonates the incoming PreQ1, allowing a nucleophilic attack on the C1' of the ribose to form the product. After dissociation, two additional enzymatic reactions on the tRNA convert PreQ1 to queuine (Q), resulting in the hypermodified nucleoside queuosine (7-(((4,5-cis-dihydroxy-2-cyclopenten-1-yl)amino)methyl)-7-deazaguanosine). This chain is Queuine tRNA-ribosyltransferase, found in Bacillus licheniformis (strain ATCC 14580 / DSM 13 / JCM 2505 / CCUG 7422 / NBRC 12200 / NCIMB 9375 / NCTC 10341 / NRRL NRS-1264 / Gibson 46).